The following is a 950-amino-acid chain: Protein translocase subunit SecA (950 aa).

ATP-binding positions include glutamine 87, 105 to 109 (GEGKT), and aspartate 524. The disordered stretch occupies residues 908–932 (GAAPVPAEARNPNDPSTWGKVGRNE). Positions 934, 936, 945, and 946 each coordinate Zn(2+).

It belongs to the SecA family. In terms of assembly, monomer and homodimer. Part of the essential Sec protein translocation apparatus which comprises SecA, SecYEG and auxiliary proteins SecDF-YajC and YidC. The cofactor is Zn(2+).

It is found in the cell inner membrane. The protein localises to the cytoplasm. It carries out the reaction ATP + H2O + cellular proteinSide 1 = ADP + phosphate + cellular proteinSide 2.. Its function is as follows. Part of the Sec protein translocase complex. Interacts with the SecYEG preprotein conducting channel. Has a central role in coupling the hydrolysis of ATP to the transfer of proteins into and across the cell membrane, serving both as a receptor for the preprotein-SecB complex and as an ATP-driven molecular motor driving the stepwise translocation of polypeptide chains across the membrane. In Bradyrhizobium sp. (strain BTAi1 / ATCC BAA-1182), this protein is Protein translocase subunit SecA.